Here is a 355-residue protein sequence, read N- to C-terminus: Elongation factor Ts (355 aa).

Residues 82–85 are involved in Mg(2+) ion dislocation from EF-Tu; it reads TDFV.

The protein belongs to the EF-Ts family.

The protein resides in the cytoplasm. In terms of biological role, associates with the EF-Tu.GDP complex and induces the exchange of GDP to GTP. It remains bound to the aminoacyl-tRNA.EF-Tu.GTP complex up to the GTP hydrolysis stage on the ribosome. This Helicobacter acinonychis (strain Sheeba) protein is Elongation factor Ts.